We begin with the raw amino-acid sequence, 342 residues long: Phosphoribosylformylglycinamidine cyclo-ligase (342 aa).

The protein belongs to the AIR synthase family.

It is found in the cytoplasm. It carries out the reaction 2-formamido-N(1)-(5-O-phospho-beta-D-ribosyl)acetamidine + ATP = 5-amino-1-(5-phospho-beta-D-ribosyl)imidazole + ADP + phosphate + H(+). Its pathway is purine metabolism; IMP biosynthesis via de novo pathway; 5-amino-1-(5-phospho-D-ribosyl)imidazole from N(2)-formyl-N(1)-(5-phospho-D-ribosyl)glycinamide: step 2/2. The chain is Phosphoribosylformylglycinamidine cyclo-ligase from Staphylococcus saprophyticus subsp. saprophyticus (strain ATCC 15305 / DSM 20229 / NCIMB 8711 / NCTC 7292 / S-41).